The following is an 83-amino-acid chain: Small ribosomal subunit protein bS16 (83 aa).

Belongs to the bacterial ribosomal protein bS16 family.

The sequence is that of Small ribosomal subunit protein bS16 from Pseudomonas aeruginosa (strain UCBPP-PA14).